Here is an 86-residue protein sequence, read N- to C-terminus: Anti-adapter protein IraP (86 aa).

Positions 1-47 (MKNLIAELLLKLAQKEEESKELVAQVEALEIIVTAMLRNMAQSEQQM) form a coiled coil.

This sequence belongs to the IraP family. As to quaternary structure, interacts with RssB.

The protein resides in the cytoplasm. Functionally, inhibits RpoS proteolysis by regulating RssB activity, thereby increasing the stability of the sigma stress factor RpoS especially during phosphate and magnesium starvation, but also in stationary phase and during nitrogen starvation. Its effect on RpoS stability is due to its interaction with RssB, which probably blocks the interaction of RssB with RpoS, and the consequent delivery of the RssB-RpoS complex to the ClpXP protein degradation pathway. The chain is Anti-adapter protein IraP from Salmonella arizonae (strain ATCC BAA-731 / CDC346-86 / RSK2980).